Reading from the N-terminus, the 474-residue chain is Crocetin glucosyltransferase, chloroplastic (474 aa).

A chloroplast-targeting transit peptide spans 1–45 (MVQQRHVLLITYPAQGHINPALQFAQRLLRMGIQVTLATSVYALS). Histidine 17 acts as the Proton acceptor in catalysis. Histidine 17 contacts an anthocyanidin. UDP-alpha-D-glucose contacts are provided by glutamine 346, histidine 361, tryptophan 364, asparagine 365, serine 366, glutamate 369, aspartate 385, and glutamine 386.

Belongs to the UDP-glycosyltransferase family. Ubiquitous.

The protein localises to the plastid. It is found in the chloroplast. It carries out the reaction crocetin + UDP-alpha-D-glucose = beta-D-glucosyl crocetin + UDP. The enzyme catalyses beta-D-glucosyl crocetin + UDP-alpha-D-glucose = bis(beta-D-glucosyl) crocetin + UDP. It catalyses the reaction beta-D-gentiobiosyl crocetin + UDP-alpha-D-glucose = beta-D-gentiobiosyl beta-D-glucosyl crocetin + UDP. Its function is as follows. Glucosyltransferase acting on a broad range of substrates, including crocetin, 4-coumaric acid, caffeic acid and ferulic acid. No activity with indol-3-acetic acid, bixin and norbixin, and no formation of O-glucosides. Involved with UGT94E5 in sequential glycosylation of crocetin to crocin (bis(beta-D-gentiobiosyl) crocetin). The sequence is that of Crocetin glucosyltransferase, chloroplastic (UGT75L6) from Gardenia jasminoides (Cape jasmine).